A 416-amino-acid chain; its full sequence is UDP-N-acetylglucosamine 1-carboxyvinyltransferase (416 aa).

Position 22–23 (22–23 (KN)) interacts with phosphoenolpyruvate. A UDP-N-acetyl-alpha-D-glucosamine-binding site is contributed by Arg-92. Residue Cys-116 is the Proton donor of the active site. A 2-(S-cysteinyl)pyruvic acid O-phosphothioketal modification is found at Cys-116. UDP-N-acetyl-alpha-D-glucosamine contacts are provided by residues 121–125 (RPVDQ), Asp-304, and Ile-326.

This sequence belongs to the EPSP synthase family. MurA subfamily.

It is found in the cytoplasm. The enzyme catalyses phosphoenolpyruvate + UDP-N-acetyl-alpha-D-glucosamine = UDP-N-acetyl-3-O-(1-carboxyvinyl)-alpha-D-glucosamine + phosphate. It functions in the pathway cell wall biogenesis; peptidoglycan biosynthesis. In terms of biological role, cell wall formation. Adds enolpyruvyl to UDP-N-acetylglucosamine. The sequence is that of UDP-N-acetylglucosamine 1-carboxyvinyltransferase from Cupriavidus pinatubonensis (strain JMP 134 / LMG 1197) (Cupriavidus necator (strain JMP 134)).